Here is an 86-residue protein sequence, read N- to C-terminus: Small ribosomal subunit protein bS20 (86 aa).

Positions 1–27 are enriched in basic residues; that stretch reads MANSKSAKKRATQAERRRQHNASRRSM. A disordered region spans residues 1 to 28; it reads MANSKSAKKRATQAERRRQHNASRRSMM.

The protein belongs to the bacterial ribosomal protein bS20 family.

Functionally, binds directly to 16S ribosomal RNA. In Aliivibrio fischeri (strain MJ11) (Vibrio fischeri), this protein is Small ribosomal subunit protein bS20.